The sequence spans 809 residues: Poly(A) polymerase (809 aa).

The tract at residues 1 to 50 (MNKNGGPPVANITTSSTTITSTTTTQAKSQLPSSLSVNNLHTTQGSTDQP) is disordered. Over residues 12-25 (ITTSSTTITSTTTT) the composition is skewed to low complexity. The segment covering 26–50 (QAKSQLPSSLSVNNLHTTQGSTDQP) has biased composition (polar residues). ATP contacts are provided by residues 133–135 (FGS), 146–148 (DID), Asp200, Lys262, Tyr271, and 280–281 (GV). Mg(2+) is bound by residues Asp146, Asp148, and Asp200. 2 disordered regions span residues 529-760 (FVKD…QQIQ) and 785-809 (ISSS…IRGN). The span at 530–540 (VKDEGPEEPVK) shows a compositional bias: basic and acidic residues. The span at 572-655 (SPITTNINST…TPPTTTTINS (84 aa)) shows a compositional bias: low complexity. Positions 656-665 (VQPPSAQPTE) are enriched in polar residues. Low complexity predominate over residues 666-706 (NGSSTSNSPTSTSINNTALPPNPTTNSESTIETTITLPTTL). Residues 707 to 735 (ESQTSTLKDSNEISTNGTAVATEPTITSP) show a composition bias toward polar residues. Composition is skewed to low complexity over residues 736–760 (SVNI…QQIQ) and 785–794 (ISSSSETSQS).

The protein belongs to the poly(A) polymerase family. The cofactor is Mg(2+). It depends on Mn(2+) as a cofactor.

It localises to the nucleus. The catalysed reaction is RNA(n) + ATP = RNA(n)-3'-adenine ribonucleotide + diphosphate. In terms of biological role, polymerase that creates the 3'-poly(A) tail of mRNA's. May acquire specificity through interaction with a cleavage and polyadenylation factor. This is Poly(A) polymerase (papA) from Dictyostelium discoideum (Social amoeba).